We begin with the raw amino-acid sequence, 570 residues long: Proline--tRNA ligase (570 aa).

The protein belongs to the class-II aminoacyl-tRNA synthetase family. ProS type 1 subfamily. Homodimer.

It localises to the cytoplasm. The enzyme catalyses tRNA(Pro) + L-proline + ATP = L-prolyl-tRNA(Pro) + AMP + diphosphate. Functionally, catalyzes the attachment of proline to tRNA(Pro) in a two-step reaction: proline is first activated by ATP to form Pro-AMP and then transferred to the acceptor end of tRNA(Pro). As ProRS can inadvertently accommodate and process non-cognate amino acids such as alanine and cysteine, to avoid such errors it has two additional distinct editing activities against alanine. One activity is designated as 'pretransfer' editing and involves the tRNA(Pro)-independent hydrolysis of activated Ala-AMP. The other activity is designated 'posttransfer' editing and involves deacylation of mischarged Ala-tRNA(Pro). The misacylated Cys-tRNA(Pro) is not edited by ProRS. This Geotalea daltonii (strain DSM 22248 / JCM 15807 / FRC-32) (Geobacter daltonii) protein is Proline--tRNA ligase.